Consider the following 217-residue polypeptide: Large ribosomal subunit protein bL25 (217 aa).

Residues 178–217 form a disordered region; that stretch reads VVAPTEEPTEEEIEAMEGEQQTEEPEVVGESKEDEEKTEE. Positions 184 to 205 are enriched in acidic residues; that stretch reads EPTEEEIEAMEGEQQTEEPEVV. Basic and acidic residues predominate over residues 206–217; the sequence is GESKEDEEKTEE.

This sequence belongs to the bacterial ribosomal protein bL25 family. CTC subfamily. As to quaternary structure, part of the 50S ribosomal subunit; part of the 5S rRNA/L5/L18/L25 subcomplex. Contacts the 5S rRNA. Binds to the 5S rRNA independently of L5 and L18.

Its function is as follows. This is one of the proteins that binds to the 5S RNA in the ribosome where it forms part of the central protuberance. The polypeptide is Large ribosomal subunit protein bL25 (Staphylococcus aureus (strain USA300)).